Here is a 206-residue protein sequence, read N- to C-terminus: LexA repressor (206 aa).

Positions 27 to 47 (YEEIRQNLGFRSLNAVFKHLK) form a DNA-binding region, H-T-H motif. Catalysis depends on for autocatalytic cleavage activity residues S120 and K157.

This sequence belongs to the peptidase S24 family. Homodimer.

It carries out the reaction Hydrolysis of Ala-|-Gly bond in repressor LexA.. Functionally, represses a number of genes involved in the response to DNA damage (SOS response), including recA and lexA. In the presence of single-stranded DNA, RecA interacts with LexA causing an autocatalytic cleavage which disrupts the DNA-binding part of LexA, leading to derepression of the SOS regulon and eventually DNA repair. This is LexA repressor from Syntrophobacter fumaroxidans (strain DSM 10017 / MPOB).